The following is a 188-amino-acid chain: Elongation factor P-like protein (188 aa).

The protein belongs to the elongation factor P family.

The protein is Elongation factor P-like protein of Vibrio cholerae serotype O1 (strain ATCC 39541 / Classical Ogawa 395 / O395).